The chain runs to 75 residues: Peptide Ctri9610 (75 aa).

A signal peptide spans 1–22 (MNSKYLFVFLILNVIFIDLCQG). A Lysine amide modification is found at lysine 41. Residues 42–75 (GTRRRELGSQYDYLQDFRKRELDLDDLLSKFPDY) constitute a propeptide that is removed on maturation.

Belongs to the non-disulfide-bridged peptide (NDBP) superfamily. Short antimicrobial peptide (group 4) family. As to expression, expressed by the venom gland.

Its subcellular location is the secreted. In Chaerilus tricostatus (Scorpion), this protein is Peptide Ctri9610.